Here is a 458-residue protein sequence, read N- to C-terminus: SLIT-ROBO Rho GTPase-activating protein 2B (458 aa).

Residues 22 to 324 enclose the F-BAR domain; sequence KEIRAQLTEQ…AVENLDATSD (303 aa). Residues 181-203 are compositionally biased toward basic and acidic residues; it reads LKEAEKQEEKQIGKSVKQEDRQT. The interval 181–214 is disordered; it reads LKEAEKQEEKQIGKSVKQEDRQTPRSPDSTANVR. Positions 362–400 form a coiled coil; the sequence is QSELLQRCQQLQSRLSTLKIENEEVKKTMEATLQTIQDI.

As to quaternary structure, may interact with SRGAP2; formation of the heterodimer alters SRGAP2 function.

Functionally, may regulate cell migration and differentiation through interaction with and inhibition of SRGAP2. In contrast to SRGAP2C, it is not able to induce long-lasting changes in synaptic density throughout adulthood. The chain is SLIT-ROBO Rho GTPase-activating protein 2B (SRGAP2B) from Homo sapiens (Human).